We begin with the raw amino-acid sequence, 248 residues long: 4-hydroxy-tetrahydrodipicolinate reductase (248 aa).

Residues 9–14 (GAQGRV), 77–79 (GTT), and 104–107 (APNF) each bind NAD(+). The Proton donor/acceptor role is filled by His-134. His-135 lines the (S)-2,3,4,5-tetrahydrodipicolinate pocket. Lys-138 functions as the Proton donor in the catalytic mechanism. Position 144 to 145 (144 to 145 (GT)) interacts with (S)-2,3,4,5-tetrahydrodipicolinate. The interval 157–176 (RREAGMPTQPDATEQSLDGA) is disordered.

Belongs to the DapB family.

The protein localises to the cytoplasm. It catalyses the reaction (S)-2,3,4,5-tetrahydrodipicolinate + NAD(+) + H2O = (2S,4S)-4-hydroxy-2,3,4,5-tetrahydrodipicolinate + NADH + H(+). It carries out the reaction (S)-2,3,4,5-tetrahydrodipicolinate + NADP(+) + H2O = (2S,4S)-4-hydroxy-2,3,4,5-tetrahydrodipicolinate + NADPH + H(+). It participates in amino-acid biosynthesis; L-lysine biosynthesis via DAP pathway; (S)-tetrahydrodipicolinate from L-aspartate: step 4/4. Functionally, catalyzes the conversion of 4-hydroxy-tetrahydrodipicolinate (HTPA) to tetrahydrodipicolinate. This is 4-hydroxy-tetrahydrodipicolinate reductase from Corynebacterium diphtheriae (strain ATCC 700971 / NCTC 13129 / Biotype gravis).